The chain runs to 867 residues: KH domain-containing protein akap-1 (867 aa).

Residues 108-128 (HALLIALGGFSIAALFVWYIN) form a helical membrane-spanning segment. Disordered regions lie at residues 145-458 (SNGL…QKRV) and 481-523 (HENA…GLTT). The span at 152–162 (ATASDVQTENG) shows a compositional bias: polar residues. Composition is skewed to basic and acidic residues over residues 186–211 (QQKD…DKKQ), 218–239 (TEKK…DHVA), 247–275 (SEHK…EIEV), and 298–307 (QFVKKEEPKL). The span at 336-345 (TKMNDATSPL) shows a compositional bias: polar residues. The segment covering 363 to 383 (EMEKSFNEEEFRLNESSDIDR) has biased composition (basic and acidic residues). Basic residues predominate over residues 397 to 408 (NKNRSSQKRKGG). Basic and acidic residues-rich tracts occupy residues 441 to 458 (LTKE…QKRV) and 481 to 490 (HENASYEKSD). Residues 494–507 (LDSQNSEASSQDSG) are compositionally biased toward polar residues. In terms of domain architecture, KH spans 528 to 595 (LPMYEFEIPN…DEINHCLQML (68 aa)). The Tudor domain maps to 689-747 (PCQNGLLCAAPVGNAWFRAVTVQYFDETDEVFVKFVDYGGYSKMARQDLRQIRTDLMSL).

It localises to the membrane. The sequence is that of KH domain-containing protein akap-1 from Caenorhabditis elegans.